The primary structure comprises 129 residues: M-zodatoxin-Lt8a (129 aa).

The first 20 residues, 1–20 (MKYFVVALALVAAFACIAES), serve as a signal peptide directing secretion. Positions 21–60 (KPAESEHELAEVEEENELADLEDAVWLEHLADLSDLEEAR) are excised as a propeptide. The short motif at 57–60 (EEAR) is the Processing quadruplet motif element.

The protein belongs to the cationic peptide 06 (cytoinsectotoxin) family. Cleavage of the propeptide depends on the processing quadruplet motif (XXXR, with at least one of X being E). Expressed by the venom gland.

The protein resides in the secreted. Its function is as follows. Insecticidal, cytolytic and antimicrobial peptide. Has insecticidal activity against the flesh fly S.carnaria, and against the cockroach N.cinerea. Has insecticidal activity against D.melanogaster. Has hemolytic activity against human erythrocytes (EC(50)=6 uM). Has cytolytic activity against insect Sf9 cells (EC(50)=1 uM) and human leukocytes (EC(50)=3 uM). Has antibacterial activity against the Gram-positive bacteria A.globiformis VKM Ac-1112 (MIC=0.5 uM), and B.subtilis VKM B-501 (MIC=0.6-0.9 uM), and against the Gram-negative bacteria E.coli C600 (MIC=0.5 uM), E.coli DH5alpha (MIC=0.9 uM), E.coli MH1 (MIC=0.5 uM), P.aeruginosa PAO1 (MIC=1.9 uM), and P.fluorescens VKM B-894 (MIC=3.8 uM). Lacks antimicrobial activity against the Gram-positive bacteria M.luteus and S.aureus, and against the Gram-negative bacterium S.marcescens. Forms voltage-dependent, ion-permeable channels in membranes. At high concentration causes cell membrane lysis. The protein is M-zodatoxin-Lt8a (cit 1-1) of Lachesana tarabaevi (Spider).